Reading from the N-terminus, the 343-residue chain is Outer envelope pore protein 37, chloroplastic (343 aa).

2 stretches are compositionally biased toward polar residues: residues 1–11 and 23–43; these read MADPSSQNPNL and THQI…PCST. The disordered stretch occupies residues 1–43; sequence MADPSSQNPNLATPPPPSSPSPTHQIQSGTSELSPPSRPPCST. A chloroplast-targeting transit peptide spans 1–73; the sequence is MADPSSQNPN…DSLLFLNKVS (73 aa). Over 74–76 the chain is Cytoplasmic; the sequence is CKL. Residues 77–86 traverse the membrane as a beta stranded segment; sequence FDNLAKLKLS. At 87-103 the chain is on the chloroplast intermembrane side; that stretch reads FQNNSQREISQPQVSFT. A beta stranded transmembrane segment spans residues 104 to 113; sequence SKHVSVLYDV. At 114–129 the chain is on the cytoplasmic side; sequence EEKNTFIKSTLDVHPR. A beta stranded transmembrane segment spans residues 130–137; the sequence is LQLRALHN. At 138–154 the chain is on the chloroplast intermembrane side; the sequence is VKAQQGEVAMEANLTEP. Residues 155–164 form a beta stranded membrane-spanning segment; sequence GYSLELSSPV. Topologically, residues 165-169 are cytoplasmic; that stretch reads PIGYP. The beta stranded transmembrane segment at 170–178 threads the bilayer; that stretch reads RATLKFPLG. The Chloroplast intermembrane segment spans residues 179-219; that stretch reads EISLQEKDEEEEEKQKRTLSVNGILKRQVMNGVCTALYTDE. A beta stranded membrane pass occupies residues 220 to 228; that stretch reads ELRLRYAYK. Residues 229–230 are Cytoplasmic-facing; it reads DD. Residues 231–240 traverse the membrane as a beta stranded segment; sequence ALSFIPSISL. P241 is a topological domain (chloroplast intermembrane). The chain crosses the membrane as a beta stranded span at residues 242–250; the sequence is SNAASFAFK. The Cytoplasmic segment spans residues 251 to 257; that stretch reads RRFSPSD. A beta stranded membrane pass occupies residues 258-267; the sequence is KLSYWYNFDS. The Chloroplast intermembrane segment spans residues 268 to 269; it reads NM. Residues 270–279 traverse the membrane as a beta stranded segment; sequence WSAVYKRTYG. The Cytoplasmic portion of the chain corresponds to 280-286; that stretch reads KDYKLKA. The chain crosses the membrane as a beta stranded span at residues 287–296; the sequence is GYDSDVRLGW. Residues 297 to 316 lie on the Chloroplast intermembrane side of the membrane; sequence ASLWVGDEAGKVKTTPMKMK. The beta stranded transmembrane segment at 317 to 326 threads the bilayer; that stretch reads VQFMLQVPQD. At 327–343 the chain is on the cytoplasmic side; that stretch reads DIKSSVLMFRVKKRWDI.

Belongs to the plastid outer envelope porin OEP37 (TC 1.B.47) family. As to quaternary structure, forms an hourglass-shaped multimeric complex. In terms of tissue distribution, ubiquitously expressed at low levels. Mostly present in cotyledons, and accumulates in seedlings and embryos.

It localises to the plastid. Its subcellular location is the chloroplast outer membrane. In terms of biological role, voltage-dependent peptide-sensitive high conductance rectifying cation channel with a strong affinity for TIC32 that is imported into the chloroplast. Conductance is pH-dependent decreasing with decreasing pH values. The polypeptide is Outer envelope pore protein 37, chloroplastic (OEP37) (Arabidopsis thaliana (Mouse-ear cress)).